We begin with the raw amino-acid sequence, 488 residues long: Stromelysin-3 (488 aa).

A signal peptide spans 1 to 31; that stretch reads MAPAAWLRSAAARALLPPMLLLLLQPPPLLA. The propeptide at 32 to 97 is activation peptide; it reads RALPPDAHHL…GLSARNRQKR (66 aa). The disordered stretch occupies residues 41–93; the sequence is LHAERRGPQPWHAALPSSPAPAPATQEAPRPASSLRPPRCGVPDPSDGLSARN. A compositionally biased stretch (low complexity) spans 50 to 79; sequence PWHAALPSSPAPAPATQEAPRPASSLRPPR. Positions 78 to 85 match the Cysteine switch motif; the sequence is PRCGVPDP. The Zn(2+) site is built by Cys-80 and Asp-166. Residues Asp-171, Gly-172, Gly-174, and Ile-176 each coordinate Ca(2+). Zn(2+) contacts are provided by His-179, His-192, and His-215. Glu-216 is an active-site residue. Zn(2+) contacts are provided by His-219 and His-225. Hemopexin repeat units lie at residues 291–339, 340–382, 384–432, and 433–480; these read PDAC…WQGL, PSPV…ELGL, RFPV…WRGV, and PSEI…FFGC. A disulfide bridge connects residues Cys-294 and Cys-480.

The protein belongs to the peptidase M10A family. The cofactor is Ca(2+). Requires Zn(2+) as cofactor. The precursor is cleaved by a furin endopeptidase. In terms of tissue distribution, specifically expressed in stromal cells of breast carcinomas.

Its subcellular location is the secreted. It is found in the extracellular space. The protein localises to the extracellular matrix. May play an important role in the progression of epithelial malignancies. This is Stromelysin-3 (MMP11) from Homo sapiens (Human).